Reading from the N-terminus, the 171-residue chain is Large ribosomal subunit protein uL10 (171 aa).

This sequence belongs to the universal ribosomal protein uL10 family. Part of the ribosomal stalk of the 50S ribosomal subunit. The N-terminus interacts with L11 and the large rRNA to form the base of the stalk. The C-terminus forms an elongated spine to which L12 dimers bind in a sequential fashion forming a multimeric L10(L12)X complex.

Its function is as follows. Forms part of the ribosomal stalk, playing a central role in the interaction of the ribosome with GTP-bound translation factors. The sequence is that of Large ribosomal subunit protein uL10 from Erythrobacter litoralis (strain HTCC2594).